Consider the following 623-residue polypeptide: Cell pattern formation-associated protein stuA (623 aa).

The segment covering 13 to 31 (QHMQSAGQPQQPQTVTSGP) has biased composition (polar residues). The interval 13-111 (QHMQSAGQPQ…DTTGQHPPPG (99 aa)) is disordered. Residues 115 to 221 (RVTATLWEDE…HNIGALLYHP (107 aa)) form the HTH APSES-type domain. Positions 149-170 (GTKLLNVAGMTRGRRDGILKSE) form a DNA-binding region, H-T-H motif. Disordered regions lie at residues 232–270 (AAAE…PQSS) and 332–623 (ARSM…PRQR). The span at 335–374 (MPTTPATTPPGSMQPYGSAQSFDGSRQQMYNAPSQQSPYP) shows a compositional bias: polar residues. Residues 396–408 (GPPSSRPSGSAPS) are compositionally biased toward low complexity. Residues 423-446 (EHGHQSHAGEEDGEHEQHDAEYTH) show a composition bias toward basic and acidic residues. Residues 542 to 553 (APPADMANPMPN) show a composition bias toward low complexity. Positions 569–594 (KRGREGDDDLSRPVGDVPGMDMKRRK) are nuclear localization domain. Basic and acidic residues predominate over residues 570 to 579 (RGREGDDDLS).

Belongs to the EFG1/PHD1/stuA family.

The protein localises to the nucleus. Its function is as follows. Transcription factor that regulates asexual reproduction. Binds the StuA-response elements (StRE) with the consensus sequence 5'-(A/T)CGCG(T/A)N(A/C)-3' at the promoters of target genes. Controls conidiation by positively regulating the expression of brlA and abaA. Positively regulates the cephalosporin biosynthesis gene cluster. Also involved hyphal fragmentation and cell wall integrity. This is Cell pattern formation-associated protein stuA from Hapsidospora chrysogenum (strain ATCC 11550 / CBS 779.69 / DSM 880 / IAM 14645 / JCM 23072 / IMI 49137) (Acremonium chrysogenum).